Consider the following 107-residue polypeptide: Integration host factor subunit beta (107 aa).

Residues 82–101 (PGKELRERVDRRAGEPLKAE) show a composition bias toward basic and acidic residues. Residues 82–107 (PGKELRERVDRRAGEPLKAEEPDDDL) are disordered.

It belongs to the bacterial histone-like protein family. Heterodimer of an alpha and a beta chain.

Functionally, this protein is one of the two subunits of integration host factor, a specific DNA-binding protein that functions in genetic recombination as well as in transcriptional and translational control. The chain is Integration host factor subunit beta from Paraburkholderia phytofirmans (strain DSM 17436 / LMG 22146 / PsJN) (Burkholderia phytofirmans).